Consider the following 318-residue polypeptide: Olfactory receptor-like protein COR3 (318 aa).

Over 1–26 (MASGNCTTPTTFILSGLTDNPGLQMP) the chain is Extracellular. Residue Asn-5 is glycosylated (N-linked (GlcNAc...) asparagine). The helical transmembrane segment at 27–49 (LFMVFLAIYTITLLTNLGLIRLI) threads the bilayer. At 50–57 (SVDLHLQT) the chain is on the cytoplasmic side. Residues 58–79 (PMYIFLQNLSFTDAAYSTVITP) form a helical membrane-spanning segment. Topologically, residues 80–100 (KMLATFLEERKTISYVGCILQ) are extracellular. A disulfide bond links Cys-97 and Cys-179. Residues 101 to 120 (YFSFVLLTTSECLLLAVMAY) form a helical membrane-spanning segment. Over 121–139 (DRYVAICKPLLYPAIMTKA) the chain is Cytoplasmic. A helical transmembrane segment spans residues 140–164 (VCWRLVESLYFLAFLNSLVHTCGLL). Residues 165–205 (KLSFCYSNVVNHFFCDISPLFQISSSSIAISELLVIISGSL) are Extracellular-facing. The chain crosses the membrane as a helical span at residues 206-226 (FVMSSIIIILISYVFIILTVV). Topologically, residues 227–239 (MIRSKDGKYKAFS) are cytoplasmic. A helical membrane pass occupies residues 240 to 260 (TCTSHLMAVSLFHGTVIFMYL). The Extracellular segment spans residues 261–271 (RPVKLFSLDTD). Residues 272–292 (KIASLFYTVVIPMLNPLIYSW) form a helical membrane-spanning segment. The Cytoplasmic portion of the chain corresponds to 293–318 (RNKEVKDALRRLTATTFGFIDSKAVQ).

Belongs to the G-protein coupled receptor 1 family.

It is found in the cell membrane. Functionally, odorant receptor. This is Olfactory receptor-like protein COR3 (COR3) from Gallus gallus (Chicken).